The sequence spans 404 residues: Glucose-1-phosphate adenylyltransferase (404 aa).

Residues Tyr99, Gly164, Glu179 to Lys180, and Ser197 each bind alpha-D-glucose 1-phosphate.

This sequence belongs to the bacterial/plant glucose-1-phosphate adenylyltransferase family.

It carries out the reaction alpha-D-glucose 1-phosphate + ATP + H(+) = ADP-alpha-D-glucose + diphosphate. The protein operates within capsule biogenesis; capsule polysaccharide biosynthesis. It participates in glycan biosynthesis; glycogen biosynthesis. Functionally, involved in the biosynthesis of ADP-glucose, a building block, required in the biosynthesis of maltose-1-phosphate (M1P) and in the elongation reactions to produce linear alpha-1,4-glucans. Catalyzes the reaction between ATP and alpha-D-glucose 1-phosphate (G1P) to produce pyrophosphate and ADP-Glc. This is Glucose-1-phosphate adenylyltransferase from Mycobacterium ulcerans (strain Agy99).